A 244-amino-acid chain; its full sequence is Serine-rich single-pass membrane protein 1 (244 aa).

A helical membrane pass occupies residues 35 to 55 (CGTIGNFLLWYFVIVFVLMFF). 3 disordered regions span residues 65-112 (DKKD…LTPV), 132-191 (QSQF…LGSY), and 213-244 (HSQQ…FSKF). Residues 80–94 (ASKETSYKWQSKDGA) are compositionally biased toward basic and acidic residues. Polar residues-rich tracts occupy residues 97–112 (PSQT…LTPV) and 132–142 (QSQFNEVNQNQ). Residues 161–176 (SWKESESEHHPSPDSI) are compositionally biased toward basic and acidic residues. Residues 231–244 (ESSISDINTKFSKF) are compositionally biased toward polar residues.

It localises to the membrane. In Macaca fascicularis (Crab-eating macaque), this protein is Serine-rich single-pass membrane protein 1 (SSMEM1).